The sequence spans 811 residues: Leucine--tRNA ligase (811 aa).

The 'HIGH' region signature appears at 38-49; it reads SYPSGSNLHAGH. Residues 570-574 carry the 'KMSKS' region motif; the sequence is KMSKS. Lys-573 provides a ligand contact to ATP.

It belongs to the class-I aminoacyl-tRNA synthetase family.

The protein localises to the cytoplasm. The catalysed reaction is tRNA(Leu) + L-leucine + ATP = L-leucyl-tRNA(Leu) + AMP + diphosphate. The chain is Leucine--tRNA ligase from Clostridium kluyveri (strain ATCC 8527 / DSM 555 / NBRC 12016 / NCIMB 10680 / K1).